The chain runs to 225 residues: Germin-like protein 8-3 (225 aa).

The signal sequence occupies residues 1–23 (MASSSLFLLASLLVLASWQQAIA). Residues Cys-33 and Cys-48 are joined by a disulfide bond. N-linked (GlcNAc...) asparagine glycans are attached at residues Asn-53 and Asn-78. Residues 60–213 (FNAAKFDMPR…AFQVEKKVID (154 aa)) form the Cupin type-1 domain. Mn(2+) contacts are provided by His-111, His-113, Glu-118, and His-158.

Belongs to the germin family. As to quaternary structure, oligomer (believed to be a pentamer but probably hexamer).

The protein localises to the secreted. The protein resides in the extracellular space. It localises to the apoplast. Plays a role in broad-spectrum disease resistance. Probably has no oxalate oxidase activity even if the active site is conserved. The chain is Germin-like protein 8-3 (GER2) from Oryza sativa subsp. japonica (Rice).